The primary structure comprises 701 residues: Capsid protein VP1 (701 aa).

The protein belongs to the caliciviridae capsid protein family. As to quaternary structure, homodimer. Homomultimer. Interacts with the minor capsid protein VP2. May bind to VP3 and Vpg proteins. Post-translationally, cleaved by the viral protease to produce mature capsid protein.

It localises to the virion. The protein resides in the host cytoplasm. Functionally, capsid protein self assembles to form an icosahedral capsid with a T=3 symmetry, about 38 nm in diameter, and consisting of 180 capsid proteins. A smaller form of capsid with a diameter of 23 nm might be capsid proteins assembled as icosahedron with T=1 symmetry. The capsid encapsulates the genomic RNA and is decorated with VP2 proteins. This chain is Capsid protein VP1, found in Vesicular exanthema of swine virus serotype A48 (isolate Swine/United States/A48/1948) (VESV).